A 148-amino-acid chain; its full sequence is Putative HTH-type transcriptional regulator NMA1593 (148 aa).

The HTH rrf2-type domain occupies Arg2–Glu131.

The sequence is that of Putative HTH-type transcriptional regulator NMA1593 from Neisseria meningitidis serogroup A / serotype 4A (strain DSM 15465 / Z2491).